The sequence spans 487 residues: L-tartrate/succinate antiporter (487 aa).

The next 14 membrane-spanning stretches (helical) occupy residues 10-30, 33-53, 54-74, 93-113, 137-157, 189-209, 236-256, 292-312, 313-333, 340-360, 370-390, 393-413, 418-438, and 465-485; these read YLAPLAVIAIIALLPVPAGLE, TWLYFAVFTGVIVGLILEPVP, GAVVAMVGISIIAILSPWLLF, WAVSGFSNSVIWLIFAAFMFG, TLFLGYAVMFSELILAPVTPS, IGSYIMWMGIVADCVTSAIFL, FLGMLPLSILLVLLVPWLAYV, LMVGALVLWIFGGDYIDAAMV, GYSVVALMLLLRIISWDDIVS, VFFWLASLITLATGLNNTGFI, SLSGYSPTMVMVTLIVVFYLL, FFASATAYTCALAPMMIAAAL, IPLPVFCLMVGAAIGLGSILT, and IFGLIFLVLLVITGLLWMPVV.

It belongs to the SLC13A/DASS transporter (TC 2.A.47) family. DIT1 subfamily.

It localises to the cell inner membrane. It carries out the reaction (2R,3R)-tartrate(out) + succinate(in) = (2R,3R)-tartrate(in) + succinate(out). Functionally, catalyzes the uptake of tartrate in exchange for intracellular succinate. Essential for anaerobic L-tartrate fermentation. The chain is L-tartrate/succinate antiporter (ttdT) from Shigella flexneri.